Here is a 488-residue protein sequence, read N- to C-terminus: Probable (S)-N-methylcoclaurine 3'-hydroxylase isozyme 2 (488 aa).

The helical transmembrane segment at 2 to 21 (EVLSIAIVSFSFLLFLFFIL) threads the bilayer. Cysteine 427 contacts heme.

The protein belongs to the cytochrome P450 family. Requires heme as cofactor. As to expression, expressed at low levels in roots.

The protein resides in the endoplasmic reticulum membrane. Its subcellular location is the microsome membrane. The catalysed reaction is (S)-N-methylcoclaurine + reduced [NADPH--hemoprotein reductase] + O2 = (S)-3'-hydroxy-N-methylcoclaurine + oxidized [NADPH--hemoprotein reductase] + H2O + H(+). Its pathway is alkaloid biosynthesis; (S)-reticuline biosynthesis; (S)-reticuline from (S)-norcoclaurine: step 3/4. Functionally, 3'-hydroxylation of (S)-N-methylcoclaurine. This chain is Probable (S)-N-methylcoclaurine 3'-hydroxylase isozyme 2 (CYP80B2), found in Coptis japonica (Japanese goldthread).